The sequence spans 367 residues: Phosphoribosylaminoimidazole-succinocarboxamide synthase (367 aa).

This sequence belongs to the SAICAR synthetase family.

It catalyses the reaction 5-amino-1-(5-phospho-D-ribosyl)imidazole-4-carboxylate + L-aspartate + ATP = (2S)-2-[5-amino-1-(5-phospho-beta-D-ribosyl)imidazole-4-carboxamido]succinate + ADP + phosphate + 2 H(+). It functions in the pathway purine metabolism; IMP biosynthesis via de novo pathway; 5-amino-1-(5-phospho-D-ribosyl)imidazole-4-carboxamide from 5-amino-1-(5-phospho-D-ribosyl)imidazole-4-carboxylate: step 1/2. In Shewanella oneidensis (strain ATCC 700550 / JCM 31522 / CIP 106686 / LMG 19005 / NCIMB 14063 / MR-1), this protein is Phosphoribosylaminoimidazole-succinocarboxamide synthase.